Reading from the N-terminus, the 317-residue chain is Cyclin-dependent kinase 1 (317 aa).

The 286-residue stretch at 7–292 (YQRQEKVGEG…AKRALIHPYF (286 aa)) folds into the Protein kinase domain. ATP is bound by residues 13–21 (VGEGTYGVV) and Lys-37. Thr-17 carries the post-translational modification Phosphothreonine. Residue Tyr-18 is modified to Phosphotyrosine; by SWE1. Residue Asp-133 is the Proton acceptor of the active site. Thr-166 is modified (phosphothreonine; by CAK). A disordered region spans residues 296-317 (DDRDHNNYNEDNIGIDKHQNMQ).

It belongs to the protein kinase superfamily. CMGC Ser/Thr protein kinase family. CDC2/CDKX subfamily. Forms several complexes with cyclins CCN1, CLB2, CLN3, and HGC1. The CDC28-CCN1 complex associates with septin CDC11 upon hyphal induction. Interacts with IQG1, RFA2, and HSP90. Phosphorylated at Tyr-18 by SWE1 in a cell cycle-dependent manner. Yeast-form and hyphal cells display similar dynamics of phosphorylation and dephosphorylation of Tyr-18. Tyr-18 phosphorylation leads to inhibition of CDC28 kinase activity.

It catalyses the reaction L-seryl-[protein] + ATP = O-phospho-L-seryl-[protein] + ADP + H(+). It carries out the reaction L-threonyl-[protein] + ATP = O-phospho-L-threonyl-[protein] + ADP + H(+). Its activity is regulated as follows. Phosphorylation at Thr-17 or Tyr-18 inactivates the enzyme, while phosphorylation at Thr-166 activates it. Functionally, cyclin-dependent kinase that acts as a master regulator of the mitotic and meiotic cell cycles. May drive the G1-S transition. Plays a role in mitotic exit. Plays a role in the expression of morphology-related transcription factors, and especially hyphae-specific genes. Binds distinct cyclin subunits as cells progress through the division cycle or flamentous growth. The CDC28-CLB2 complex regulates cytokinesis partly by phosphorylating the actomyosin ring component IQG1. The CDC28-CLN3 complex phosphorylates SLA1 which regulates cortical actin patch dynamics. The CDC28-CCN1 complex phosphorylates CDC11 and SEC2 upon induction of filamentous growth. The CDC28-HGC1 complex also phosphorylates SEC2 and maintains CDC11 phosphorylation throughout hyphal growth. Moreover, the CDC28-HGC1 complex phosphorylates and prevents RGA2 from localizing to hyphal tips, leading to localized CDC42 activation for hyphal extension. CDC28-HGC1 phosphorylation of EFG1 represses cell separation genes during hyphal growth. Additional substrates for CDC28 are RFA2 in G1-phase; MOB2, which is required for the maintenance of polarisome components and for inhibition of cell separation in hyphae; and GIN4 to regulate its association to SEP7 and subsequent septin ring assembly. The sequence is that of Cyclin-dependent kinase 1 from Candida albicans (strain SC5314 / ATCC MYA-2876) (Yeast).